The following is a 333-amino-acid chain: Protoheme IX farnesyltransferase (333 aa).

7 consecutive transmembrane segments (helical) span residues 64-84, 110-130, 133-153, 161-181, 189-209, 246-266, and 287-307; these read LICT…LNCL, TVFL…VSGV, LAAG…TVIL, IVFG…AATG, WLFG…AILL, IMGV…LLPF, and AKSL…LLLI.

The protein belongs to the UbiA prenyltransferase family. Protoheme IX farnesyltransferase subfamily.

It localises to the cell inner membrane. The enzyme catalyses heme b + (2E,6E)-farnesyl diphosphate + H2O = Fe(II)-heme o + diphosphate. It participates in porphyrin-containing compound metabolism; heme O biosynthesis; heme O from protoheme: step 1/1. Converts heme B (protoheme IX) to heme O by substitution of the vinyl group on carbon 2 of heme B porphyrin ring with a hydroxyethyl farnesyl side group. This Prochlorococcus marinus (strain MIT 9215) protein is Protoheme IX farnesyltransferase.